A 541-amino-acid chain; its full sequence is Chaperonin GroEL 2 (541 aa).

ATP contacts are provided by residues 29–32 (TLGP), 86–90 (DGTTT), Gly-413, 476–478 (NAA), and Asp-492.

The protein belongs to the chaperonin (HSP60) family. As to quaternary structure, forms a cylinder of 14 subunits composed of two heptameric rings stacked back-to-back. Interacts with the co-chaperonin GroES.

Its subcellular location is the secreted. It localises to the capsule. The protein resides in the cell surface. The protein localises to the cell wall. The catalysed reaction is ATP + H2O + a folded polypeptide = ADP + phosphate + an unfolded polypeptide.. Functionally, together with its co-chaperonin GroES, plays an essential role in assisting protein folding. The GroEL-GroES system forms a nano-cage that allows encapsulation of the non-native substrate proteins and provides a physical environment optimized to promote and accelerate protein folding. This is Chaperonin GroEL 2 from Mycolicibacterium vanbaalenii (strain DSM 7251 / JCM 13017 / BCRC 16820 / KCTC 9966 / NRRL B-24157 / PYR-1) (Mycobacterium vanbaalenii).